The primary structure comprises 401 residues: MAVPAVEFPWEEQPMSAFATPITPAPIPDNISLTELIDKYFTAYNSARLREICQLLSQRVFKPEVTVGLSLSGAMTPTGLGISALAPLVRAGFVDYIISTGANLYHDIHYALGMDLYAAHPFVDDVQLRKESKIRIYDIIFDYDVLLETDAFLRQVLRSETFQRRMGTAEFHYHLGHYVRELEVQRGQPHSCLLATAYECGVPIYTSSPGDSSIGMNVAAIALEGSKLIIDPAIDVNETAAIAYFAREAAGGKGKSAALIIGGGSPKNFLLQTQPQIHEVLGLEERGHDYFIQITDARPDTGGLSGAVPSEAVSWGKVDPQGLRDTVVCYTDSTIALPILTAYCLNRCQPRPLKRLYDRRGEMVERLQQLYLQAQLQHKVKELPTEAPVATYPCGTPIRRP.

Belongs to the deoxyhypusine synthase family.

This chain is Deoxyhypusine synthase-like protein, found in Thermosynechococcus vestitus (strain NIES-2133 / IAM M-273 / BP-1).